The chain runs to 1286 residues: DNA-directed RNA polymerase 147 kDa polypeptide (1286 aa).

Belongs to the poxviridae DNA-directed RNA polymerase 147 kDa subunit family. The DNA-dependent RNA polymerase used for intermediate and late genes expression consists of eight subunits Rpo30/OPG66, Rpo7/OPG90, Rpo22/OPG103, Rpo147/OPG105, Rpo18/OPG119, Rpo19/OPG131, Rpo132/OPG151 and Rpo35/OPG156. The same holoenzyme, with the addition of the transcription-specificity factor OPG109, is used for early gene expression.

It is found in the virion. The catalysed reaction is RNA(n) + a ribonucleoside 5'-triphosphate = RNA(n+1) + diphosphate. In terms of biological role, part of the DNA-dependent RNA polymerase which catalyzes the transcription of viral DNA into RNA using the four ribonucleoside triphosphates as substrates. Responsible for the transcription of early, intermediate and late genes. DNA-dependent RNA polymerase associates with the early transcription factor (ETF), itself composed of OPG118 and OPG133, thereby allowing the early genes transcription. Late transcription, and probably also intermediate transcription, require newly synthesized RNA polymerase. The polypeptide is DNA-directed RNA polymerase 147 kDa polypeptide (OPG105) (Variola virus (isolate Human/India/Ind3/1967) (VARV)).